We begin with the raw amino-acid sequence, 394 residues long: GDP-mannose transporter (394 aa).

Residues 1–55 (MADKKNEDFVVRMPDNGTVEKEPFLARSPPARARTGSGGGFGDSFSLARVANNPP) lie on the Cytoplasmic side of the membrane. The chain crosses the membrane as a helical span at residues 56-76 (AAILAYCLSSISMTVVNKYVV). Over 77–80 (SGSE) the chain is Lumenal. The chain crosses the membrane as a helical span at residues 81–101 (WNLNFFYLAVQAIVCIIAILF). The Cytoplasmic segment spans residues 102 to 121 (CKQIGIITNLAPFDNVKAKK). Residues 122 to 144 (WFPVSLLLVGMIYTSTKALQFLS) traverse the membrane as a helical segment. Residues 145–149 (VPVYT) are Lumenal-facing. A helical transmembrane segment spans residues 150 to 167 (IFKNLTIIAIAYGEVLWF). Over 168–173 (GGSVSP) the chain is Cytoplasmic. A helical membrane pass occupies residues 174-198 (LALVSFGLMVLSSVVAAWADIQSAI). Over 199–213 (HGGSHPSEASTAIST) the chain is Lumenal. The chain crosses the membrane as a helical span at residues 214–234 (LNAGYAWMGMNVFCSAAYLLG). Topologically, residues 235 to 246 (MRKVIHKMNFKD) are cytoplasmic. Residues 247–267 (WDSMFYNNLLTIPVLIVCSLI) form a helical membrane-spanning segment. Over 268–287 (AEDWSAANLARNFPIESRNA) the chain is Lumenal. A helical transmembrane segment spans residues 288–308 (LFIGMIYSGLGAIFISYCSAW). At 309-316 (CIRVTTST) the chain is on the cytoplasmic side. Residues 317-339 (TYSMVGALNKLPIAISGLVFFSA) traverse the membrane as a helical segment. The Lumenal portion of the chain corresponds to 340–342 (PVT). The chain crosses the membrane as a helical span at residues 343 to 362 (FGSVSAIVIGFISGIVYAWA). The Cytoplasmic portion of the chain corresponds to 363-394 (KARQSSQAKSALPTQQPVMSASSQSNKDASNS). A disordered region spans residues 371–394 (KSALPTQQPVMSASSQSNKDASNS). Positions 374–394 (LPTQQPVMSASSQSNKDASNS) are enriched in polar residues.

Belongs to the TPT transporter family. SLC35D subfamily. As to quaternary structure, homooligomer.

The protein resides in the golgi apparatus membrane. It is found in the cytoplasmic vesicle membrane. It localises to the endoplasmic reticulum membrane. Its function is as follows. Involved in the import of GDP-mannose from the cytoplasm into the Golgi lumen. The polypeptide is GDP-mannose transporter (VRG4) (Pyricularia oryzae (strain 70-15 / ATCC MYA-4617 / FGSC 8958) (Rice blast fungus)).